The following is a 251-amino-acid chain: MTLLLEEKYPIENCEPWDFCGFSYKVNFYNREDLTGIVVALDLTDHVLEKAIEEKANLIITHHPFIYNNNLEEEFANFPYKEKIYNKLVKLKISVYSLHTNFDADKQGTSYWVAKEFFPDEKPSPLGKYGALIKTKIELSELKAILRKKYSGPIMTNNKKASFSFNGVAFFAGSGDSPEINEHTTKNNIIITSDTKWSDWIFLSQNKKTLVNISHQTEELFIKVIYFLLTKKFKKGVNVSTFYYKNLINSL.

A divalent metal cation-binding residues include His62, His63, Asp103, His215, and Glu219.

It belongs to the GTP cyclohydrolase I type 2/NIF3 family. Homohexamer.

The sequence is that of GTP cyclohydrolase 1 type 2 homolog from Mycoplasmopsis pulmonis (strain UAB CTIP) (Mycoplasma pulmonis).